The sequence spans 88 residues: Eclosion hormone (88 aa).

A signal peptide spans 1 to 26 (MAGKVTVAFFMFAMIAFLANFGYVEC). Disulfide bonds link Cys-40-Cys-64, Cys-44-Cys-60, and Cys-47-Cys-75.

Belongs to the insect eclosion hormone family.

The protein resides in the secreted. Functionally, neuropeptide that triggers the performance of ecdysis behaviors at the end of a molt. It triggers adult behavior patterns: larval, pupal and adult ecdysis, and plasticization during the molt. The sequence is that of Eclosion hormone from Manduca sexta (Tobacco hawkmoth).